A 702-amino-acid chain; its full sequence is MNAHFANEVQYDLTRDPSSPASLIHVIISSECLAAAGVPLSALVRGRPDGGAAANFRVETQTRAHATGDCTPWRSAFAAYVPADAVGAILAPVIPAHPDLLPRVPSAGGLFVSLPVACDAQGVYDPYTVAALRLAWGPWATCARVLLFSYDELVPPNTRYAADGARLMRLCRHFCRYVARLGAAAPAAATEAAAHLSLGMGESGTPTPQASSVSGGAGPAVVGTPDPPISPEEQLTAPGGDTATAEDVSITQENEEILALVQRAVQDVTRRHPVRARPKHAASGVASGLRQGALVHQAVSGGALGASDAEAVLAGLEPPGGGRFASRGGPRAAGEDVLNDVLTLVPGTAKPRSLVEWLDRGWEALAGGDRPDWLWSRRSISVVLRHHYGTKQRFVVVSYENSVAWGGRRARPPRLSSELATALTEACAAERVVRPHQLSPAAQTALLRRFPALEGPLRHPRPVLQPFDIAAEVAFVARIQIACLRALGHSIRAALQGGPRIFQRLRYDFGPHQSEWLGEVTRRFPVLLENLMRALEGTAPDAFFHTAYALAVLAHLGGQGGRGRRRRLVPLSDDIPARFADSDAHYAFDYYSTSGDTLRLTNRPIAVVIDGDVNGREQSKCRFMEGSPSTAPHRVCEQYLPGESYAYLCLGFNRRLCGLVVFPGGFAFTINTAAYLSLADPVARAVGLRFCRGAATGPGLVR.

Positions 200 to 244 are disordered; sequence MGESGTPTPQASSVSGGAGPAVVGTPDPPISPEEQLTAPGGDTAT. The span at 210 to 224 shows a compositional bias: low complexity; it reads ASSVSGGAGPAVVGT.

It belongs to the herpesviridae CVC1 protein family. In terms of assembly, interacts (via C-terminus) with capsid vertex component 2/CVC2.

Its subcellular location is the virion. It is found in the host nucleus. Its function is as follows. Capsid vertex-specific component that plays a role during viral DNA encapsidation, assuring correct genome cleavage and presumably stabilizing capsids that contain full-length viral genomes. This chain is Capsid vertex component 1, found in Homo sapiens (Human).